Here is a 78-residue protein sequence, read N- to C-terminus: Small ribosomal subunit protein uS17 (78 aa).

The protein belongs to the universal ribosomal protein uS17 family. In terms of assembly, part of the 30S ribosomal subunit.

Functionally, one of the primary rRNA binding proteins, it binds specifically to the 5'-end of 16S ribosomal RNA. The protein is Small ribosomal subunit protein uS17 of Agrobacterium fabrum (strain C58 / ATCC 33970) (Agrobacterium tumefaciens (strain C58)).